Consider the following 65-residue polypeptide: MLSNGLKIDQEKKFFILIIIIINNNNNNNNNNNNNNNNNNNNNNNNNNNNNNNNKNNKNNNKNND.

The interval 24–65 (NNNNNNNNNNNNNNNNNNNNNNNNNNNNNNNKNNKNNNKNND) is disordered.

This is an uncharacterized protein from Dictyostelium discoideum (Social amoeba).